Consider the following 300-residue polypeptide: 5'-adenylylsulfate reductase-like 5 (300 aa).

Positions 1–23 are cleaved as a signal peptide; the sequence is MDSRVSILFVCAIAVSCFTSGSA. A Thioredoxin domain is found at 41-161; it reads FDLEAKCPPS…LIEFYEEATG (121 aa). N-linked (GlcNAc...) asparagine glycosylation is present at Asn-136. A helical transmembrane segment spans residues 202–222; that stretch reads FLVLSLLFICLQMAILVFPIA.

The protein resides in the membrane. This chain is 5'-adenylylsulfate reductase-like 5 (APRL5), found in Arabidopsis thaliana (Mouse-ear cress).